Consider the following 516-residue polypeptide: Maturase K (516 aa).

Belongs to the intron maturase 2 family. MatK subfamily.

It localises to the plastid. It is found in the chloroplast. Functionally, usually encoded in the trnK tRNA gene intron. Probably assists in splicing its own and other chloroplast group II introns. The sequence is that of Maturase K from Medeola virginiana (Indian cucumber root).